The sequence spans 196 residues: ATP-dependent Clp protease proteolytic subunit (196 aa).

Residue Ser101 is the Nucleophile of the active site. His126 is a catalytic residue.

It belongs to the peptidase S14 family. As to quaternary structure, component of the chloroplastic Clp protease core complex.

Its subcellular location is the plastid. The protein resides in the chloroplast stroma. It catalyses the reaction Hydrolysis of proteins to small peptides in the presence of ATP and magnesium. alpha-casein is the usual test substrate. In the absence of ATP, only oligopeptides shorter than five residues are hydrolyzed (such as succinyl-Leu-Tyr-|-NHMec, and Leu-Tyr-Leu-|-Tyr-Trp, in which cleavage of the -Tyr-|-Leu- and -Tyr-|-Trp bonds also occurs).. Its function is as follows. Cleaves peptides in various proteins in a process that requires ATP hydrolysis. Has a chymotrypsin-like activity. Plays a major role in the degradation of misfolded proteins. The protein is ATP-dependent Clp protease proteolytic subunit of Vitis vinifera (Grape).